We begin with the raw amino-acid sequence, 345 residues long: Meiotically up-regulated gene 97 protein (345 aa).

2 consecutive transmembrane segments (helical) span residues 292 to 312 (MWVL…GLWM) and 319 to 329 (FAHGMLLNLGI).

The protein localises to the membrane. Functionally, required for correct meiotic chromosome segregation. Appears to also have role in sporulation. The polypeptide is Meiotically up-regulated gene 97 protein (mug97) (Schizosaccharomyces pombe (strain 972 / ATCC 24843) (Fission yeast)).